A 521-amino-acid chain; its full sequence is Bifunctional purine biosynthesis protein PurH (521 aa).

Residues 1 to 147 (MAKITRALIS…KNNADVTVVV (147 aa)) enclose the MGS-like domain.

This sequence belongs to the PurH family.

The enzyme catalyses (6R)-10-formyltetrahydrofolate + 5-amino-1-(5-phospho-beta-D-ribosyl)imidazole-4-carboxamide = 5-formamido-1-(5-phospho-D-ribosyl)imidazole-4-carboxamide + (6S)-5,6,7,8-tetrahydrofolate. The catalysed reaction is IMP + H2O = 5-formamido-1-(5-phospho-D-ribosyl)imidazole-4-carboxamide. Its pathway is purine metabolism; IMP biosynthesis via de novo pathway; 5-formamido-1-(5-phospho-D-ribosyl)imidazole-4-carboxamide from 5-amino-1-(5-phospho-D-ribosyl)imidazole-4-carboxamide (10-formyl THF route): step 1/1. It participates in purine metabolism; IMP biosynthesis via de novo pathway; IMP from 5-formamido-1-(5-phospho-D-ribosyl)imidazole-4-carboxamide: step 1/1. This Geobacter metallireducens (strain ATCC 53774 / DSM 7210 / GS-15) protein is Bifunctional purine biosynthesis protein PurH.